Reading from the N-terminus, the 214-residue chain is Adenylate kinase (214 aa).

An ATP-binding site is contributed by Gly-15–Thr-20. Positions Ala-35–Val-64 are NMP. AMP contacts are provided by residues Ser-36, Arg-41, Gly-62–Val-64, Gly-90–Arg-93, and Gln-97. Residues Asn-127–Asp-164 are LID. Arg-128 provides a ligand contact to ATP. Residues Cys-131 and Cys-134 each contribute to the Zn(2+) site. Val-137 to Tyr-138 is an ATP binding site. 2 residues coordinate Zn(2+): Cys-151 and Cys-154. 2 residues coordinate AMP: Arg-161 and Arg-172. Leu-200 serves as a coordination point for ATP.

Belongs to the adenylate kinase family. In terms of assembly, monomer.

It is found in the cytoplasm. It catalyses the reaction AMP + ATP = 2 ADP. It functions in the pathway purine metabolism; AMP biosynthesis via salvage pathway; AMP from ADP: step 1/1. Functionally, catalyzes the reversible transfer of the terminal phosphate group between ATP and AMP. Plays an important role in cellular energy homeostasis and in adenine nucleotide metabolism. This chain is Adenylate kinase, found in Mycoplasma genitalium (strain ATCC 33530 / DSM 19775 / NCTC 10195 / G37) (Mycoplasmoides genitalium).